The primary structure comprises 385 residues: Phospho-N-acetylmuramoyl-pentapeptide-transferase (385 aa).

Transmembrane regions (helical) follow at residues 23–43 (FITVRAALASITALGIALGAG), 79–99 (MGGIIILLSVGGATLLWGAVA), 103–123 (VWLSLVAMGGLGVVGFADDYV), 135–155 (AWYKVAGQVAVGLFVGSVLYF), 186–206 (LGVDLGWLVYLPVVVFIVTAV), 218–238 (GLTTGVTAFVSLGLVALVYVS), 258–278 (LTVFVAAVTAACFGFLWYNGY), 282–302 (VFMGDTGALALGGAVGSTILM), 307–327 (LLLPLLGIVYFAEALSVIVQT), and 362–382 (KIVTRFWIVTAITVIAALLIL).

This sequence belongs to the glycosyltransferase 4 family. MraY subfamily. It depends on Mg(2+) as a cofactor.

Its subcellular location is the cell inner membrane. The catalysed reaction is UDP-N-acetyl-alpha-D-muramoyl-L-alanyl-gamma-D-glutamyl-meso-2,6-diaminopimeloyl-D-alanyl-D-alanine + di-trans,octa-cis-undecaprenyl phosphate = di-trans,octa-cis-undecaprenyl diphospho-N-acetyl-alpha-D-muramoyl-L-alanyl-D-glutamyl-meso-2,6-diaminopimeloyl-D-alanyl-D-alanine + UMP. It participates in cell wall biogenesis; peptidoglycan biosynthesis. Its function is as follows. Catalyzes the initial step of the lipid cycle reactions in the biosynthesis of the cell wall peptidoglycan: transfers peptidoglycan precursor phospho-MurNAc-pentapeptide from UDP-MurNAc-pentapeptide onto the lipid carrier undecaprenyl phosphate, yielding undecaprenyl-pyrophosphoryl-MurNAc-pentapeptide, known as lipid I. This chain is Phospho-N-acetylmuramoyl-pentapeptide-transferase, found in Salinibacter ruber (strain DSM 13855 / M31).